The primary structure comprises 524 residues: Cytochrome P450 4F1 (524 aa).

Residues 15–35 form a helical membrane-spanning segment; it reads VAFPWQTLLLFGASWILAQIL. 2 residues coordinate heme: Glu-328 and Cys-468.

This sequence belongs to the cytochrome P450 family. It depends on heme as a cofactor. Expressed in liver.

Its subcellular location is the endoplasmic reticulum membrane. The protein localises to the microsome membrane. It catalyses the reaction (5Z,8Z,11Z,14Z)-eicosatetraenoate + reduced [NADPH--hemoprotein reductase] + O2 = 20-hydroxy-(5Z,8Z,11Z,14Z)-eicosatetraenoate + oxidized [NADPH--hemoprotein reductase] + H2O + H(+). The enzyme catalyses 5-hydroxy-(6E,8Z,11Z,14Z)-eicosatetraenoate + reduced [NADPH--hemoprotein reductase] + O2 = 5,20-dihydroxy-(6E,8Z,11Z,14Z)-eicosatetraenoate + oxidized [NADPH--hemoprotein reductase] + H2O + H(+). The catalysed reaction is 8-hydroxy-(5Z,9E,11Z,14Z)-eicosatetraenoate + reduced [NADPH--hemoprotein reductase] + O2 = 8,20-dihydroxy-(5Z,9E,11Z,14Z)-eicosatetraenoate + oxidized [NADPH--hemoprotein reductase] + H2O + H(+). It carries out the reaction leukotriene B4 + reduced [NADPH--hemoprotein reductase] + O2 = 20-hydroxy-leukotriene B4 + oxidized [NADPH--hemoprotein reductase] + H2O + H(+). It catalyses the reaction 6-trans-leukotriene B4 + reduced [NADPH--hemoprotein reductase] + O2 = 20-hydroxy-6-trans-leukotriene B4 + oxidized [NADPH--hemoprotein reductase] + H2O + H(+). The enzyme catalyses lipoxin A4 + reduced [NADPH--hemoprotein reductase] + O2 = 20-hydroxy-lipoxin A4 + oxidized [NADPH--hemoprotein reductase] + H2O + H(+). Functionally, a cytochrome P450 monooxygenase involved in the metabolism of arachidonic acid and its oxygenated derivatives. Mechanistically, uses molecular oxygen inserting one oxygen atom into a substrate, and reducing the second into a water molecule, with two electrons provided by NADPH via cytochrome P450 reductase (CPR; NADPH-ferrihemoprotein reductase). Participates in the conversion of arachidonic acid to omega-hydroxyeicosatetraenoic acid (20-HETE), a signaling molecule acting both as vasoconstrictive and natriuretic with overall effect on arterial blood pressure. May play a role in the oxidative inactivation of eicosanoids, including both pro-inflammatory and anti-inflammatory mediators such as leukotriene B4 (LTB4), lipoxin A4 (LXA4), and several HETEs. The polypeptide is Cytochrome P450 4F1 (Rattus norvegicus (Rat)).